Reading from the N-terminus, the 243-residue chain is Ubiquinone/menaquinone biosynthesis C-methyltransferase UbiE (243 aa).

Residues Thr-69, Asp-90, and 116–117 (DA) contribute to the S-adenosyl-L-methionine site.

It belongs to the class I-like SAM-binding methyltransferase superfamily. MenG/UbiE family.

The catalysed reaction is a 2-demethylmenaquinol + S-adenosyl-L-methionine = a menaquinol + S-adenosyl-L-homocysteine + H(+). It catalyses the reaction a 2-methoxy-6-(all-trans-polyprenyl)benzene-1,4-diol + S-adenosyl-L-methionine = a 5-methoxy-2-methyl-3-(all-trans-polyprenyl)benzene-1,4-diol + S-adenosyl-L-homocysteine + H(+). The protein operates within quinol/quinone metabolism; menaquinone biosynthesis; menaquinol from 1,4-dihydroxy-2-naphthoate: step 2/2. Its pathway is cofactor biosynthesis; ubiquinone biosynthesis. In terms of biological role, methyltransferase required for the conversion of demethylmenaquinol (DMKH2) to menaquinol (MKH2) and the conversion of 2-polyprenyl-6-methoxy-1,4-benzoquinol (DDMQH2) to 2-polyprenyl-3-methyl-6-methoxy-1,4-benzoquinol (DMQH2). This Burkholderia mallei (strain NCTC 10247) protein is Ubiquinone/menaquinone biosynthesis C-methyltransferase UbiE.